The primary structure comprises 565 residues: Molybdenum cofactor biosynthesis protein 1 (565 aa).

Residues 3–367 are molybdenum cofactor biosynthesis protein A; sequence LLARHAIRLL…AVQRKKKQHA (365 aa). In terms of domain architecture, Radical SAM core spans 64–276; that stretch reads SFGRHHTYLR…LQIIRQRWPD (213 aa). Position 73 (Arg73) interacts with GTP. Residues Cys80 and Cys84 each contribute to the [4Fe-4S] cluster site. Position 86 (Tyr86) interacts with S-adenosyl-L-methionine. Cys87 serves as a coordination point for [4Fe-4S] cluster. GTP is bound at residue Arg123. Gly127 is a binding site for S-adenosyl-L-methionine. GTP is bound at residue Thr154. Ser178 is an S-adenosyl-L-methionine binding site. Lys214 serves as a coordination point for GTP. Met248 is a binding site for S-adenosyl-L-methionine. Residues Cys311 and Cys314 each contribute to the [4Fe-4S] cluster site. 316 to 318 lines the GTP pocket; sequence RLR. Position 328 (Cys328) interacts with [4Fe-4S] cluster. Residue Asp525 is the For molybdenum cofactor biosynthesis protein C activity of the active site.

It in the C-terminal section; belongs to the MoaC family. In the N-terminal section; belongs to the radical SAM superfamily. MoaA family. Isoform Mocs1a and isoform Mocs1b probably form a heterooligomer. It depends on [4Fe-4S] cluster as a cofactor.

The enzyme catalyses GTP + AH2 + S-adenosyl-L-methionine = (8S)-3',8-cyclo-7,8-dihydroguanosine 5'-triphosphate + 5'-deoxyadenosine + L-methionine + A + H(+). It carries out the reaction (8S)-3',8-cyclo-7,8-dihydroguanosine 5'-triphosphate = cyclic pyranopterin phosphate + diphosphate. It participates in cofactor biosynthesis; molybdopterin biosynthesis. In terms of biological role, isoform Mocs1a and isoform Mocs1b probably form a complex that catalyzes the conversion of 5'-GTP to cyclic pyranopterin monophosphate (cPMP). Mocs1a catalyzes the cyclization of GTP to (8S)-3',8-cyclo-7,8-dihydroguanosine 5'-triphosphate and Mocs1b catalyzes the subsequent conversion of (8S)-3',8-cyclo-7,8-dihydroguanosine 5'-triphosphate to cPMP. The polypeptide is Molybdenum cofactor biosynthesis protein 1 (Mocs1) (Drosophila melanogaster (Fruit fly)).